A 350-amino-acid polypeptide reads, in one-letter code: Renin receptor (350 aa).

An N-terminal signal peptide occupies residues 1–16; sequence MAVFVVLLALVAGVLG. Topologically, residues 17 to 302 are extracellular; that stretch reads NEFSILKSPG…YNLAYKYNFE (286 aa). A helical transmembrane segment spans residues 303–323; it reads YSVVFNMVLWIMIALALAVII. Topologically, residues 324 to 350 are cytoplasmic; the sequence is TSYNIWNMDPGYDSIIYRMTNQKIRMD. Residues 346–350 carry the Mediates retrograde transport to the ER motif; the sequence is KIRMD.

In terms of assembly, interacts with renin. Accessory component of the multisubunit proton-transporting vacuolar (V)-ATPase protein pump. Interacts (via N-terminus) with ATP6AP1 (via N-terminus). Interacts with ATP6V0D1; ATP6V0D1 is a V-ATPase complex subunit and the interaction promotes V-ATPase complex assembly. Interacts with TMEM9; TMEM9 is a V-ATPase assembly regulator and the interaction induces the interaction with ATP6V0D1. Interacts with VMA21 (via N-terminus); VMA21 is a V-ATPase accessory component. Post-translationally, phosphorylated. In terms of processing, proteolytically cleaved by a furin-like convertase in the trans-Golgi network to generate N- and C-terminal fragments. Expressed in brain, heart, placenta, liver, kidney and pancreas. Barely detectable in lung and skeletal muscles. In the kidney cortex it is restricted to the mesangium of glomeruli. In the coronary and kidney artery it is expressed in the subendothelium, associated to smooth muscles where it colocalizes with REN. Expressed in vascular structures and by syncytiotrophoblast cells in the mature fetal placenta.

The protein resides in the endoplasmic reticulum membrane. It localises to the lysosome membrane. The protein localises to the cytoplasmic vesicle. It is found in the autophagosome membrane. Its subcellular location is the cell projection. The protein resides in the dendritic spine membrane. It localises to the axon. The protein localises to the endosome membrane. It is found in the clathrin-coated vesicle membrane. Its subcellular location is the secretory vesicle. The protein resides in the synaptic vesicle membrane. Functionally, multifunctional protein which functions as a renin, prorenin cellular receptor and is involved in the assembly of the lysosomal proton-transporting V-type ATPase (V-ATPase) and the acidification of the endo-lysosomal system. May mediate renin-dependent cellular responses by activating ERK1 and ERK2. By increasing the catalytic efficiency of renin in AGT/angiotensinogen conversion to angiotensin I, may also play a role in the renin-angiotensin system (RAS). Through its function in V-type ATPase (v-ATPase) assembly and acidification of the lysosome it regulates protein degradation and may control different signaling pathways important for proper brain development, synapse morphology and synaptic transmission. The protein is Renin receptor of Homo sapiens (Human).